The primary structure comprises 363 residues: Cytochrome b (363 aa).

The next 4 membrane-spanning stretches (helical) occupy residues 23 to 43 (VGFI…LLTF), 67 to 89 (WFVR…IHII), 102 to 122 (SWYS…TGYV), and 164 to 184 (FFIL…LHLY). Residues histidine 73 and histidine 87 each coordinate heme b. The heme b site is built by histidine 168 and histidine 182. A ubiquinone is bound at residue histidine 187. 4 helical membrane-spanning segments follow: residues 210–230 (ILFS…PQVG), 271–291 (VFPT…LLII), 309–329 (RVWT…GCIG), and 332–352 (VINL…TTFV).

This sequence belongs to the cytochrome b family. The main subunits of complex b-c1 are: cytochrome b, cytochrome c1 and the Rieske protein. Heme b is required as a cofactor.

Its subcellular location is the mitochondrion inner membrane. In terms of biological role, component of the ubiquinol-cytochrome c reductase complex (complex III or cytochrome b-c1 complex) that is part of the mitochondrial respiratory chain. The b-c1 complex mediates electron transfer from ubiquinol to cytochrome c. Contributes to the generation of a proton gradient across the mitochondrial membrane that is then used for ATP synthesis. This is Cytochrome b (MT-CYB) from Theileria parva (East coast fever infection agent).